The chain runs to 196 residues: CASP-like protein 2A2 (196 aa).

Residues 1–26 lie on the Cytoplasmic side of the membrane; the sequence is MAQGKESVSVVEMEGSGNGPAVEMRH. Residues 27–47 traverse the membrane as a helical segment; it reads FETLFRLLPVGLCISALVLML. Topologically, residues 48-68 are extracellular; sequence KSEQSDQYMQLDYSNVDAFRC. A helical transmembrane segment spans residues 69 to 89; sequence LAYANGICAGYSLISAFDSMV. Over 90–98 the chain is Cytoplasmic; it reads PVSHHISRS. Residues 99-119 form a helical membrane-spanning segment; the sequence is WILFLLDQGITYLMLAGGAVA. The Extracellular segment spans residues 120–148; that stretch reads TQVLYVAYKGDEKATWEQICGSYGRFCNR. The helical transmembrane segment at 149–169 threads the bilayer; the sequence is AGASVIISFFALVCFLLLSLL. Residues 170-196 are Cytoplasmic-facing; that stretch reads SAYRLFSKYDPPIHGGAKLEDQTTAQI.

The protein belongs to the Casparian strip membrane proteins (CASP) family. In terms of assembly, homodimer and heterodimers.

It localises to the cell membrane. This chain is CASP-like protein 2A2, found in Picea sitchensis (Sitka spruce).